The primary structure comprises 215 residues: uncharacterized protein (215 aa).

This is an uncharacterized protein from Acanthamoeba polyphaga mimivirus (APMV).